Reading from the N-terminus, the 139-residue chain is Transcription antitermination protein NusB (139 aa).

Belongs to the NusB family.

Its function is as follows. Involved in transcription antitermination. Required for transcription of ribosomal RNA (rRNA) genes. Binds specifically to the boxA antiterminator sequence of the ribosomal RNA (rrn) operons. In Lactiplantibacillus plantarum (strain ATCC BAA-793 / NCIMB 8826 / WCFS1) (Lactobacillus plantarum), this protein is Transcription antitermination protein NusB.